We begin with the raw amino-acid sequence, 313 residues long: MADPYEFLMCIHDPEEDTLTRNFPIPATPLDQNTKDISLNLDRKTSLRIFRPPTEEFCVTTNKLLPIIIYFHGGGFVLFNADSTINHDFCQSIATHLPALVVSVDYRLAPENRLPAAYDDAVDALNWVKDQGLGKLNNSEVWLKEYGDFSKCFIMGCSSGGNIAYHASLRAIEMDLEPVIINGLILHSPFFGSLQRTESDLKVINDQDLPLAVRDVMWELALPLGSSRDHVYCNPNIANDGSSSGNMAGLIKRCLVIGFYGDPLIDRQIQLVKMLEEKGVKVETWIEQEGYHGVPCFDPKIRETLLGKIKYFI.

The Involved in the stabilization of the negatively charged intermediate by the formation of the oxyanion hole signature appears at 72 to 74 (HGG). Residues Ser-158, Asp-262, and His-292 contribute to the active site.

It belongs to the 'GDXG' lipolytic enzyme family.

The enzyme catalyses 3-O-acetylpapaveroxine + H2O = narcotine hemiacetal + acetate + H(+). Its pathway is alkaloid biosynthesis. Functionally, carboxylesterase involved in the biosynthesis of the benzylisoquinoline alkaloid noscapine. Converts 3-O-acetylpapaveroxine to narcotine hemiacetal. The protein is 3-O-acetylpapaveroxine carboxylesterase CXE2 of Papaver somniferum (Opium poppy).